The following is a 131-amino-acid chain: Glycine cleavage system H protein (131 aa).

The region spanning Thr-24–Arg-106 is the Lipoyl-binding domain. Lys-65 carries the N6-lipoyllysine modification.

The protein belongs to the GcvH family. The glycine cleavage system is composed of four proteins: P, T, L and H. (R)-lipoate is required as a cofactor.

The glycine cleavage system catalyzes the degradation of glycine. The H protein shuttles the methylamine group of glycine from the P protein to the T protein. The protein is Glycine cleavage system H protein of Mycolicibacterium smegmatis (strain ATCC 700084 / mc(2)155) (Mycobacterium smegmatis).